We begin with the raw amino-acid sequence, 512 residues long: Photosystem II CP47 reaction center protein (512 aa).

The next 6 membrane-spanning stretches (helical) occupy residues 21–36, 101–115, 140–156, 203–218, 237–252, and 457–472; these read AVHLMHTALVSGWAGS, IVLSGLLFLAAIWHW, GIHLFLSGVLCFAFGAF, IAAGILGILAGLFHLS, VLSSSIAAVFFAAFVV, and TFALLFFFGHIWHGAR.

Belongs to the PsbB/PsbC family. PsbB subfamily. As to quaternary structure, PSII is composed of 1 copy each of membrane proteins PsbA, PsbB, PsbC, PsbD, PsbE, PsbF, PsbH, PsbI, PsbJ, PsbK, PsbL, PsbM, PsbT, PsbX, PsbY, PsbZ, Psb30/Ycf12, at least 3 peripheral proteins of the oxygen-evolving complex and a large number of cofactors. It forms dimeric complexes. The cofactor is Binds multiple chlorophylls. PSII binds additional chlorophylls, carotenoids and specific lipids..

The protein localises to the plastid. The protein resides in the chloroplast thylakoid membrane. In terms of biological role, one of the components of the core complex of photosystem II (PSII). It binds chlorophyll and helps catalyze the primary light-induced photochemical processes of PSII. PSII is a light-driven water:plastoquinone oxidoreductase, using light energy to abstract electrons from H(2)O, generating O(2) and a proton gradient subsequently used for ATP formation. This chain is Photosystem II CP47 reaction center protein, found in Physcomitrium patens (Spreading-leaved earth moss).